A 107-amino-acid chain; its full sequence is uncharacterized protein (107 aa).

This is an uncharacterized protein from Pasteurella multocida (strain Pm70).